A 484-amino-acid polypeptide reads, in one-letter code: GTPase Obg (484 aa).

Positions 7–164 (PRFVDRVVIH…RDLTLELKTV (158 aa)) constitute an Obg domain. Positions 21-43 (SGGNGCASVHREKFKPLGGPDGG) are disordered. Positions 165 to 345 (ADVGLVGFPS…LIFGLSQMIS (181 aa)) constitute an OBG-type G domain. Residues 171–178 (GFPSAGKS), 196–200 (FTTLV), 217–220 (DVPG), 297–300 (NKID), and 326–328 (STA) each bind GTP. Residues S178 and T198 each contribute to the Mg(2+) site. The OCT domain maps to 363–441 (PIPVDDSGFT…IGEMTFDWEP (79 aa)). The disordered stretch occupies residues 439–484 (WEPQTPAGEPVAMSGRGTDPRLDSNKRVGAAERKAARSRRREHGDG). The segment covering 456-473 (TDPRLDSNKRVGAAERKA) has biased composition (basic and acidic residues). The segment covering 474–484 (ARSRRREHGDG) has biased composition (basic residues).

It belongs to the TRAFAC class OBG-HflX-like GTPase superfamily. OBG GTPase family. As to quaternary structure, monomer. Requires Mg(2+) as cofactor.

The protein resides in the cytoplasm. In terms of biological role, an essential GTPase which binds GTP, GDP and possibly (p)ppGpp with moderate affinity, with high nucleotide exchange rates and a fairly low GTP hydrolysis rate. Plays a role in control of the cell cycle, stress response, ribosome biogenesis and in those bacteria that undergo differentiation, in morphogenesis control. The sequence is that of GTPase Obg from Mycobacterium tuberculosis (strain CDC 1551 / Oshkosh).